The primary structure comprises 161 residues: SsrA-binding protein (161 aa).

The disordered stretch occupies residues 137 to 161 (HDKRTDSKEKDWNRDKARIMKSSLR). The span at 139–154 (KRTDSKEKDWNRDKAR) shows a compositional bias: basic and acidic residues.

Belongs to the SmpB family.

It localises to the cytoplasm. Functionally, required for rescue of stalled ribosomes mediated by trans-translation. Binds to transfer-messenger RNA (tmRNA), required for stable association of tmRNA with ribosomes. tmRNA and SmpB together mimic tRNA shape, replacing the anticodon stem-loop with SmpB. tmRNA is encoded by the ssrA gene; the 2 termini fold to resemble tRNA(Ala) and it encodes a 'tag peptide', a short internal open reading frame. During trans-translation Ala-aminoacylated tmRNA acts like a tRNA, entering the A-site of stalled ribosomes, displacing the stalled mRNA. The ribosome then switches to translate the ORF on the tmRNA; the nascent peptide is terminated with the 'tag peptide' encoded by the tmRNA and targeted for degradation. The ribosome is freed to recommence translation, which seems to be the essential function of trans-translation. The sequence is that of SsrA-binding protein from Aliivibrio salmonicida (strain LFI1238) (Vibrio salmonicida (strain LFI1238)).